Reading from the N-terminus, the 261-residue chain is NAD(P)H-quinone oxidoreductase subunit K, chloroplastic (261 aa).

[4Fe-4S] cluster is bound by residues C64, C65, C129, and C160.

The protein belongs to the complex I 20 kDa subunit family. As to quaternary structure, NDH is composed of at least 16 different subunits, 5 of which are encoded in the nucleus. [4Fe-4S] cluster serves as cofactor.

Its subcellular location is the plastid. It is found in the chloroplast thylakoid membrane. It catalyses the reaction a plastoquinone + NADH + (n+1) H(+)(in) = a plastoquinol + NAD(+) + n H(+)(out). It carries out the reaction a plastoquinone + NADPH + (n+1) H(+)(in) = a plastoquinol + NADP(+) + n H(+)(out). Its function is as follows. NDH shuttles electrons from NAD(P)H:plastoquinone, via FMN and iron-sulfur (Fe-S) centers, to quinones in the photosynthetic chain and possibly in a chloroplast respiratory chain. The immediate electron acceptor for the enzyme in this species is believed to be plastoquinone. Couples the redox reaction to proton translocation, and thus conserves the redox energy in a proton gradient. This chain is NAD(P)H-quinone oxidoreductase subunit K, chloroplastic, found in Physcomitrium patens (Spreading-leaved earth moss).